Consider the following 261-residue polypeptide: Chanoclavine-I dehydrogenase ifgE (261 aa).

An N-terminal signal peptide occupies residues 1 to 20; sequence MASVKSRVFAITGGASGIGA. I18, K48, D66, R132, Y166, K170, and T201 together coordinate NADP(+). Residue Y166 is the Proton acceptor of the active site. Residue K170 is the Lowers pKa of active site Tyr of the active site.

It belongs to the short-chain dehydrogenases/reductases (SDR) family.

Its pathway is alkaloid biosynthesis; ergot alkaloid biosynthesis. Chanoclavine-I dehydrogenase; part of the gene cluster that mediates the biosynthesis of isofumigaclavines, fungal ergot alkaloids. The tryptophan dimethylallyltransferase ifgA catalyzes the first step of ergot alkaloid biosynthesis by condensing dimethylallyl diphosphate (DMAP) and tryptophan to form 4-dimethylallyl-L-tryptophan. The second step is catalyzed by the methyltransferase ifgB that methylates 4-dimethylallyl-L-tryptophan in the presence of S-adenosyl-L-methionine, resulting in the formation of N-methyl-dimethylallyl-L-tryptophan. The catalase ifgD and the FAD-dependent oxidoreductase ifgC then transform N-methyl-dimethylallyl-L-tryptophan to chanoclavine-I which is further oxidized by ifgE in the presence of NAD(+), resulting in the formation of chanoclavine-I aldehyde. The chanoclavine-I aldehyde reductases ifgG and/or fgaOx3 reduce chanoclavine-I aldehyde to dihydrochanoclavine-I aldehyde that spontaneously dehydrates to form 6,8-dimethyl-6,7-didehydroergoline. The festuclavine dehydrogenases ifgF1 and/or ifgF2 then catalyze the reduction of 6,8-dimethyl-6,7-didehydroergoline to form festuclavine. Hydrolysis of festuclavine by a yet undetermined cytochrome P450 monooxygenase (called ifgH) then leads to the formation of isofumigaclavine B which is in turn acetylated by ifgI to isofumigaclavine A. Penicillium roqueforti has interestingly at least two sets of genes for the consumption of chanoclavine-I aldehyde on three different loci, the OYEs ifgG/fgaOx3 and the festuclavine synthase homologs ifgF1/ifgF2. The reason for the duplication of these genes is unclear, probably to ensure the conversion of chanoclavine-I aldehyde by differential gene expression under various environmental conditions. The protein is Chanoclavine-I dehydrogenase ifgE of Penicillium roqueforti (strain FM164).